We begin with the raw amino-acid sequence, 118 residues long: UPF0344 protein BLi01172/BL01343 (118 aa).

4 consecutive transmembrane segments (helical) span residues 6–26, 33–53, 62–82, and 89–109; these read ITSWVIALILVFVAYGLYSSG, ITHMILRLFYIIVIITGAQLF, EYIAKALLGLITIGFMEMLLI, and AATGIWIGFIVVLLLTVVLGL.

Belongs to the UPF0344 family.

The protein localises to the cell membrane. The polypeptide is UPF0344 protein BLi01172/BL01343 (Bacillus licheniformis (strain ATCC 14580 / DSM 13 / JCM 2505 / CCUG 7422 / NBRC 12200 / NCIMB 9375 / NCTC 10341 / NRRL NRS-1264 / Gibson 46)).